We begin with the raw amino-acid sequence, 146 residues long: uncharacterized protein (146 aa).

Residues 7–146 enclose the N-acetyltransferase domain; it reads LDINYKTDEL…DGHDVLVWTP (140 aa).

This is an uncharacterized protein from Staphylococcus saprophyticus subsp. saprophyticus (strain ATCC 15305 / DSM 20229 / NCIMB 8711 / NCTC 7292 / S-41).